Reading from the N-terminus, the 240-residue chain is Ubiquinone biosynthesis O-methyltransferase (240 aa).

S-adenosyl-L-methionine-binding residues include arginine 44, glycine 64, aspartate 85, and methionine 129.

Belongs to the methyltransferase superfamily. UbiG/COQ3 family.

It carries out the reaction a 3-demethylubiquinol + S-adenosyl-L-methionine = a ubiquinol + S-adenosyl-L-homocysteine + H(+). It catalyses the reaction a 3-(all-trans-polyprenyl)benzene-1,2-diol + S-adenosyl-L-methionine = a 2-methoxy-6-(all-trans-polyprenyl)phenol + S-adenosyl-L-homocysteine + H(+). Its pathway is cofactor biosynthesis; ubiquinone biosynthesis. Its function is as follows. O-methyltransferase that catalyzes the 2 O-methylation steps in the ubiquinone biosynthetic pathway. This chain is Ubiquinone biosynthesis O-methyltransferase, found in Escherichia coli (strain SMS-3-5 / SECEC).